The primary structure comprises 434 residues: Serine hydroxymethyltransferase (434 aa).

(6S)-5,6,7,8-tetrahydrofolate is bound by residues leucine 133 and 137–139 (GHL). Lysine 242 carries the post-translational modification N6-(pyridoxal phosphate)lysine.

This sequence belongs to the SHMT family. Homodimer. The cofactor is pyridoxal 5'-phosphate.

Its subcellular location is the cytoplasm. It carries out the reaction (6R)-5,10-methylene-5,6,7,8-tetrahydrofolate + glycine + H2O = (6S)-5,6,7,8-tetrahydrofolate + L-serine. Its pathway is one-carbon metabolism; tetrahydrofolate interconversion. It functions in the pathway amino-acid biosynthesis; glycine biosynthesis; glycine from L-serine: step 1/1. Functionally, catalyzes the reversible interconversion of serine and glycine with tetrahydrofolate (THF) serving as the one-carbon carrier. This reaction serves as the major source of one-carbon groups required for the biosynthesis of purines, thymidylate, methionine, and other important biomolecules. Also exhibits THF-independent aldolase activity toward beta-hydroxyamino acids, producing glycine and aldehydes, via a retro-aldol mechanism. This chain is Serine hydroxymethyltransferase, found in Hyphomicrobium methylovorum.